Reading from the N-terminus, the 400-residue chain is Subtilisin-like protease 7 (400 aa).

Positions 1 to 20 (MGFITKAIPLALAAMSVVNG) are cleaved as a signal peptide. A propeptide spanning residues 21–119 (AEILETRAGV…IERDARVQIN (99 aa)) is cleaved from the precursor. Positions 36 to 118 (KYIVIMNDGV…YIERDARVQI (83 aa)) constitute an Inhibitor I9 domain. The 272-residue stretch at 129–400 (SWGLARVGSR…GKLINNGSGK (272 aa)) folds into the Peptidase S8 domain. Catalysis depends on charge relay system residues Asp-161 and His-192. Residues Asn-222 and Asn-252 are each glycosylated (N-linked (GlcNAc...) asparagine). Residue Ser-346 is the Charge relay system of the active site. Residue Asn-396 is glycosylated (N-linked (GlcNAc...) asparagine).

The protein belongs to the peptidase S8 family.

The protein resides in the secreted. Its function is as follows. Secreted subtilisin-like serine protease with keratinolytic activity that contributes to pathogenicity. This is Subtilisin-like protease 7 (SUB7) from Arthroderma otae (strain ATCC MYA-4605 / CBS 113480) (Microsporum canis).